The following is a 147-amino-acid chain: Prefoldin subunit alpha (147 aa).

This sequence belongs to the prefoldin alpha subunit family. In terms of assembly, heterohexamer of two alpha and four beta subunits.

It localises to the cytoplasm. In terms of biological role, molecular chaperone capable of stabilizing a range of proteins. Seems to fulfill an ATP-independent, HSP70-like function in archaeal de novo protein folding. This chain is Prefoldin subunit alpha, found in Thermococcus onnurineus (strain NA1).